A 276-amino-acid polypeptide reads, in one-letter code: Undecaprenyl-diphosphatase 1 (276 aa).

7 consecutive transmembrane segments (helical) span residues 4–24, 45–62, 83–103, 108–128, 187–207, 217–237, and 252–272; these read ILICKALILGVVEGLTEFLPV, KTFDVVIQFGAILAVCWE, FTLNVVIATIPAIALGLLFEK, VLFSPVPVAFALVVGGAIILW, VATEFSFFLAIPIIFGATLYE, VDSLGLFALGLVAAFVSAFVC, and VFAWYRIAFGLFVLLVGYSGW.

It belongs to the UppP family.

The protein localises to the cell inner membrane. It catalyses the reaction di-trans,octa-cis-undecaprenyl diphosphate + H2O = di-trans,octa-cis-undecaprenyl phosphate + phosphate + H(+). Its function is as follows. Catalyzes the dephosphorylation of undecaprenyl diphosphate (UPP). Confers resistance to bacitracin. The polypeptide is Undecaprenyl-diphosphatase 1 (Burkholderia ambifaria (strain ATCC BAA-244 / DSM 16087 / CCUG 44356 / LMG 19182 / AMMD) (Burkholderia cepacia (strain AMMD))).